Here is a 202-residue protein sequence, read N- to C-terminus: Ribonuclease HII (202 aa).

The RNase H type-2 domain maps to 18–202 (GQYAGVDEVG…KSFRPVREAM (185 aa)). Residues D24, E25, and D116 each contribute to the a divalent metal cation site.

It belongs to the RNase HII family. It depends on Mn(2+) as a cofactor. The cofactor is Mg(2+).

It is found in the cytoplasm. It catalyses the reaction Endonucleolytic cleavage to 5'-phosphomonoester.. In terms of biological role, endonuclease that specifically degrades the RNA of RNA-DNA hybrids. The sequence is that of Ribonuclease HII from Shewanella piezotolerans (strain WP3 / JCM 13877).